Consider the following 221-residue polypeptide: uncharacterized protein (221 aa).

Positions 1-18 (MKRFLLLIILFGISFSFV) are cleaved as a signal peptide.

This is an uncharacterized protein from Aquifex aeolicus (strain VF5).